The sequence spans 474 residues: Probable glycine dehydrogenase (decarboxylating) subunit 2 (474 aa).

Lysine 262 carries the N6-(pyridoxal phosphate)lysine modification.

It belongs to the GcvP family. C-terminal subunit subfamily. The glycine cleavage system is composed of four proteins: P, T, L and H. In this organism, the P 'protein' is a heterodimer of two subunits. The cofactor is pyridoxal 5'-phosphate.

The catalysed reaction is N(6)-[(R)-lipoyl]-L-lysyl-[glycine-cleavage complex H protein] + glycine + H(+) = N(6)-[(R)-S(8)-aminomethyldihydrolipoyl]-L-lysyl-[glycine-cleavage complex H protein] + CO2. In terms of biological role, the glycine cleavage system catalyzes the degradation of glycine. The P protein binds the alpha-amino group of glycine through its pyridoxal phosphate cofactor; CO(2) is released and the remaining methylamine moiety is then transferred to the lipoamide cofactor of the H protein. The polypeptide is Probable glycine dehydrogenase (decarboxylating) subunit 2 (Thermotoga petrophila (strain ATCC BAA-488 / DSM 13995 / JCM 10881 / RKU-1)).